A 478-amino-acid chain; its full sequence is 3-isopropylmalate dehydratase large subunit (478 aa).

3 residues coordinate [4Fe-4S] cluster: cysteine 347, cysteine 407, and cysteine 410.

This sequence belongs to the aconitase/IPM isomerase family. LeuC type 1 subfamily. Heterodimer of LeuC and LeuD. Requires [4Fe-4S] cluster as cofactor.

The enzyme catalyses (2R,3S)-3-isopropylmalate = (2S)-2-isopropylmalate. Its pathway is amino-acid biosynthesis; L-leucine biosynthesis; L-leucine from 3-methyl-2-oxobutanoate: step 2/4. Catalyzes the isomerization between 2-isopropylmalate and 3-isopropylmalate, via the formation of 2-isopropylmaleate. The chain is 3-isopropylmalate dehydratase large subunit from Prochlorococcus marinus (strain MIT 9303).